A 208-amino-acid polypeptide reads, in one-letter code: Thymidylate kinase (208 aa).

11 to 18 is an ATP binding site; sequence GGEGAGKS.

The protein belongs to the thymidylate kinase family.

It catalyses the reaction dTMP + ATP = dTDP + ADP. Functionally, phosphorylation of dTMP to form dTDP in both de novo and salvage pathways of dTTP synthesis. The sequence is that of Thymidylate kinase (tmk) from Caulobacter vibrioides (strain ATCC 19089 / CIP 103742 / CB 15) (Caulobacter crescentus).